The primary structure comprises 371 residues: Signal peptide peptidase-like 1 (371 aa).

Topologically, residues 1–6 are lumenal; it reads MESLWK. The helical transmembrane segment at 7–27 threads the bilayer; sequence LSYLLEPASLALILTAVSVAY. The Cytoplasmic segment spans residues 28-57; that stretch reads ASASRALDHGREMERNLDFSEASITLDRSQ. Residues 58–75 form a helical membrane-spanning segment; the sequence is ALMIPLASSCSLLLMFYL. Over 76–80 the chain is Lumenal; it reads FSSVS. A helical membrane pass occupies residues 81-103; it reads HLVTAFTAVASAMALFFCLSPYV. The Cytoplasmic segment spans residues 104–123; sequence NCVRSRLGVGDPFVSRCCSK. Residues 124–146 form a helical membrane-spanning segment; sequence PFTRLQGLLVAICVGTVVAWLVS. The Lumenal segment spans residues 147–149; it reads GHW. Residues 150-167 traverse the membrane as a helical segment; sequence LLNNLLGISICIAFVSHV. Residues 168–171 lie on the Cytoplasmic side of the membrane; sequence RLPN. The helical transmembrane segment at 172–192 threads the bilayer; sequence IKICALLLVCLFVYDVFWVFF. Residue D186 is part of the active site. The Lumenal portion of the chain corresponds to 193–258; sequence SERFFGANVM…LAPGSSPGDY (66 aa). The chain crosses the membrane as a helical span at residues 259 to 279; the sequence is MMLGLGDMAIPGMLLALVLSF. Residue D265 is part of the active site. Residues 280-301 are Cytoplasmic-facing; that stretch reads DHRKIKDMSVSQDMPPSKQRKY. The chain crosses the membrane as a helical span at residues 302 to 322; it reads VWYALTGYGVGLVTALAAGIL. Over 323 to 326 the chain is Lumenal; the sequence is SQSP. The chain crosses the membrane as a helical span at residues 327 to 347; it reads QPALLYLVPSTLGPVMYMSWL. The short motif at 328–330 is the PAL element; the sequence is PAL. The Cytoplasmic segment spans residues 348–371; that stretch reads RNELWELWEGSRPIINDKAHLLEV.

This sequence belongs to the peptidase A22B family.

Its subcellular location is the endosome membrane. Functionally, intramembrane-cleaving aspartic protease (I-CLiP) that cleaves type II membrane signal peptides in the hydrophobic plane of the membrane. The chain is Signal peptide peptidase-like 1 (SPPL1) from Oryza sativa subsp. japonica (Rice).